A 456-amino-acid chain; its full sequence is Carnosine N-methyltransferase unmet (456 aa).

R154, G195, E216, D282, F283, and C299 together coordinate S-adenosyl-L-methionine. Carnosine-binding residues include D303, H334, and Y385. The span at 402–418 (RGKRKASREPHDLIVRE) shows a compositional bias: basic and acidic residues. Positions 402–456 (RGKRKASREPHDLIVREDSEEEGEQQPERNETEEKQQLKPLATANCETEIKEQPS) are disordered. 2 positions are modified to phosphoserine: S408 and S420. Basic and acidic residues predominate over residues 427–438 (QPERNETEEKQQ).

Belongs to the carnosine N-methyltransferase family. Associates with the GATOR2 complex; the interaction is probably direct and is inhibited by S-adenosyl-L-methionine binding. Associates with the GATOR1 complex; the interaction is probably indirect and mediated by the GATOR2 complex.

It carries out the reaction carnosine + S-adenosyl-L-methionine = anserine + S-adenosyl-L-homocysteine + H(+). S-adenosyl-L-methionine-binding protein that acts as a sensor to signal methionine availability to the mTORC1 signaling pathway. Associates with the GATOR2 complex in the absence of methionine to inhibit mTORC1 signaling, but dissociates in the presence of the methionine derivative S-adenosyl-L-methionine; S-adenosyl-L-homocysteine binding does not induce dissociation. Required for mTORC1 pathway response to methionine starvation. Exerts a protective function on developing egg chambers by inhibiting mTORC1 signaling under starvation conditions. May also function as a N-methyltransferase that mediates the formation of anserine (beta-alanyl-N(Pi)-methyl-L-histidine) from carnosine. It is unclear whether this protein has retained N-methyltransferase activity or if it is an evolutionary intermediate whose substrate binding ability has been co-opted to function as a nutrient sensor for mTORC1 signaling. The chain is Carnosine N-methyltransferase unmet from Drosophila melanogaster (Fruit fly).